The following is a 245-amino-acid chain: rRNA adenine N-6-methyltransferase (245 aa).

The S-adenosyl-L-methionine site is built by asparagine 10, leucine 12, glycine 37, glutamate 58, aspartate 83, and asparagine 100.

Belongs to the class I-like SAM-binding methyltransferase superfamily. rRNA adenine N(6)-methyltransferase family.

It catalyses the reaction adenosine(2085) in 23S rRNA + 2 S-adenosyl-L-methionine = N(6)-dimethyladenosine(2085) in 23S rRNA + 2 S-adenosyl-L-homocysteine + 2 H(+). This protein produces a dimethylation of the adenine residue at position 2085 in 23S rRNA, resulting in reduced affinity between ribosomes and macrolide-lincosamide-streptogramin B antibiotics. This is rRNA adenine N-6-methyltransferase (ermB) from Enterococcus faecalis (strain ATCC 700802 / V583).